A 288-amino-acid chain; its full sequence is Probable proteasome subunit alpha type-7 (288 aa).

N-acetylthreonine is present on threonine 2. The tract at residues 247 to 288 (INGDDDEDEDDSDNVMSSDDENAPVATNANATTDQEGDIHLE) is disordered. The span at 249 to 268 (GDDDEDEDDSDNVMSSDDEN) shows a compositional bias: acidic residues. The segment covering 269-279 (APVATNANATT) has biased composition (low complexity).

It belongs to the peptidase T1A family. In terms of assembly, the 26S proteasome consists of a 20S proteasome core and two 19S regulatory subunits. The 20S proteasome core is composed of 28 subunits that are arranged in four stacked rings, resulting in a barrel-shaped structure. The two end rings are each formed by seven alpha subunits, and the two central rings are each formed by seven beta subunits. The catalytic chamber with the active sites is on the inside of the barrel. The alpha and beta forms are probably products of the same gene with different post-translational modifications.

The protein resides in the cytoplasm. The protein localises to the nucleus. Its function is as follows. The proteasome degrades poly-ubiquitinated proteins in the cytoplasm and in the nucleus. It is essential for the regulated turnover of proteins and for the removal of misfolded proteins. The proteasome is a multicatalytic proteinase complex that is characterized by its ability to cleave peptides with Arg, Phe, Tyr, Leu, and Glu adjacent to the leaving group at neutral or slightly basic pH. It has an ATP-dependent proteolytic activity. The sequence is that of Probable proteasome subunit alpha type-7 (PRE10) from Saccharomyces cerevisiae (strain ATCC 204508 / S288c) (Baker's yeast).